Consider the following 333-residue polypeptide: D-glutamate N-acetyltransferase (333 aa).

It belongs to the N-acetyltransferase DgcN family.

It catalyses the reaction D-glutamate + acetyl-CoA = N-acetyl-D-glutamate + CoA + H(+). Its pathway is amino-acid degradation. Its function is as follows. N-acetyltransferase involved in a deamination-independent D-glutamate degradation pathway, named the DgcN-DgcA pathway. Catalyzes the transfer of the acetyl moiety from acetyl-CoA to D-glutamate to generate N-acetyl-D-glutamate. This chain is D-glutamate N-acetyltransferase, found in Tritonibacter scottomollicae (Epibacterium scottomollicae).